The chain runs to 156 residues: Histone H2B.2 (156 aa).

Basic and acidic residues-rich tracts occupy residues Met-1–Ala-10 and Ala-24–Lys-58. A disordered region spans residues Met-1 to Lys-63. 2 positions are modified to N6-acetyllysine: Lys-40 and Lys-41. Lys-152 participates in a covalent cross-link: Glycyl lysine isopeptide (Lys-Gly) (interchain with G-Cter in ubiquitin).

The protein belongs to the histone H2B family. In terms of assembly, the nucleosome is a histone octamer containing two molecules each of H2A, H2B, H3 and H4 assembled in one H3-H4 heterotetramer and two H2A-H2B heterodimers. The octamer wraps approximately 147 bp of DNA. Post-translationally, the N-terminus is blocked. In terms of processing, can be acetylated to form H2BK33ac and H2BK34ac. Acetylated mainly on the ubiquitinated form. Monoubiquitinated to form H2BK143ub1; which is increased during the light period and may give a specific tag for epigenetic transcriptional activation.

It is found in the nucleus. It localises to the chromosome. Its function is as follows. Core component of nucleosome. Nucleosomes wrap and compact DNA into chromatin, limiting DNA accessibility to the cellular machineries which require DNA as a template. Histones thereby play a central role in transcription regulation, DNA repair, DNA replication and chromosomal stability. DNA accessibility is regulated via a complex set of post-translational modifications of histones, also called histone code, and nucleosome remodeling. The chain is Histone H2B.2 from Chlamydomonas reinhardtii (Chlamydomonas smithii).